Here is a 532-residue protein sequence, read N- to C-terminus: Telomerase Cajal body protein 1 (532 aa).

The interval 1–48 is disordered; that stretch reads MKTSEELRLAPDSLPSDLVPAPVLQASPADKNTDSEPVPPPCGGDDQL. Phosphoserine is present on residues Ser27, Ser61, and Ser83. The interval 83-115 is disordered; the sequence is SPRIEEQEVPENASLPVEETNRPELESGEAMEG. 6 WD repeats span residues 151 to 190, 206 to 251, 256 to 297, 307 to 348, 349 to 389, and 395 to 434; these read RSENFLKGCKWAPDGSCILTNSADNVLRIYNLPPELYSES, EGDT…LRAS, NHLD…RDCE, GQSG…ALLG, GHQG…HLLW, and VTTNQRIYFDLDPSGQFLVSGNTSGVVSVWDISGAFSDCK. Thr474 carries the post-translational modification Phosphothreonine. Ser476 is modified (phosphoserine). The interval 505–532 is disordered; it reads CGGGPDPSNPDEDQDEKGQGRTEAVGMS.

This sequence belongs to the TCAB1 family. As to quaternary structure, component of the telomerase holoenzyme complex composed of one molecule of TERT, one molecule of WRAP53/TCAB1, two molecules of H/ACA ribonucleoprotein complex subunits DKC1, NOP10, NHP2 and GAR1, and a telomerase RNA template component (TERC). The telomerase holoenzyme complex is associated with TEP1, SMG6/EST1A and POT1. Interacts with the chaperonin-containing T-complex (TRiC) complex; which mediates the folding of WRAP53/TCAB1. Interacts with COIL. Interacts with SMN1. Interacts with RNF8. Interacts with histone H2AX. In terms of processing, phosphorylated at Ser-61 by ATM in response to DNA damage, promoting its interaction with histone H2AX and localization to sites of DNA double-strand breaks.

The protein localises to the nucleus. It is found in the cajal body. The protein resides in the chromosome. Its subcellular location is the telomere. RNA chaperone that plays a key role in telomere maintenance and RNA localization to Cajal bodies. Specifically recognizes and binds the Cajal body box (CAB box) present in both small Cajal body RNAs (scaRNAs) and telomerase RNA template component (TERC). Essential component of the telomerase holoenzyme complex, a ribonucleoprotein complex essential for the replication of chromosome termini that elongates telomeres in most eukaryotes. In the telomerase holoenzyme complex, required to stimulate the catalytic activity of the complex. Acts by specifically binding the CAB box of the TERC RNA and controlling the folding of the CR4/CR5 region of the TERC RNA, a critical step for telomerase activity. In addition, also controls telomerase holoenzyme complex localization to Cajal body. During S phase, required for delivery of TERC to telomeres during S phase and for telomerase activity. In addition to its role in telomere maintenance, also required for Cajal body formation, probably by mediating localization of scaRNAs to Cajal bodies. Also plays a role in DNA repair: phosphorylated by ATM in response to DNA damage and relocalizes to sites of DNA double-strand breaks to promote the repair of DNA double-strand breaks. Acts by recruiting the ubiquitin ligase RNF8 to DNA breaks and promote both homologous recombination (HR) and non-homologous end joining (NHEJ). The sequence is that of Telomerase Cajal body protein 1 from Rattus norvegicus (Rat).